The following is a 192-amino-acid chain: HTH-type transcriptional regulator Hpr (192 aa).

Positions serine 12–glycine 156 constitute an HTH marR-type domain. The segment at residues isoleucine 62 to glutamate 85 is a DNA-binding region (H-T-H motif).

Homodimer.

Negative regulator of protease production and sporulation. In Halalkalibacterium halodurans (strain ATCC BAA-125 / DSM 18197 / FERM 7344 / JCM 9153 / C-125) (Bacillus halodurans), this protein is HTH-type transcriptional regulator Hpr.